Reading from the N-terminus, the 177-residue chain is Large ribosomal subunit protein uL6 (177 aa).

The protein belongs to the universal ribosomal protein uL6 family. As to quaternary structure, part of the 50S ribosomal subunit.

Functionally, this protein binds to the 23S rRNA, and is important in its secondary structure. It is located near the subunit interface in the base of the L7/L12 stalk, and near the tRNA binding site of the peptidyltransferase center. The protein is Large ribosomal subunit protein uL6 of Vibrio parahaemolyticus serotype O3:K6 (strain RIMD 2210633).